The primary structure comprises 478 residues: Putative response regulator NtrX-like (478 aa).

The Response regulatory domain maps to 5-121; that stretch reads DVLIVDDEED…KLVILLKRAC (117 aa). The residue at position 54 (Asp-54) is a 4-aspartylphosphate. The Sigma-54 factor interaction domain occupies 143-372; that stretch reads LVGNSTITLK…LRNVVEWTLI (230 aa). ATP contacts are provided by residues 171-178 and 235-244; these read GKVGSGKE and ANNGTLYIDE.

Functionally, member of the two-component regulatory system RBE_0312/RBE_0470. The sequence is that of Putative response regulator NtrX-like from Rickettsia bellii (strain RML369-C).